We begin with the raw amino-acid sequence, 408 residues long: 26S proteasome regulatory subunit 6B homolog (408 aa).

At Ala-2 the chain carries N-acetylalanine. Ser-16 bears the Phosphoserine mark. A coiled-coil region spans residues 28 to 75 (EDLYGRLKSLERQLEFTDIQEEYVKDEQKNLKRELLRAQEEVKRIQSV). 196–203 (GPPGTGKT) provides a ligand contact to ATP.

Belongs to the AAA ATPase family. In terms of assembly, component of the 19S regulatory particle (RP/PA700) base subcomplex of the 26S proteasome. The 26S proteasome is composed of a core protease (CP), known as the 20S proteasome, capped at one or both ends by the 19S regulatory particle (RP/PA700). The RP/PA700 complex is composed of at least 17 different subunits in two subcomplexes, the base and the lid, which form the portions proximal and distal to the 20S proteolytic core, respectively. As to expression, expressed in dark-grown etiolated seedlings, roots, leaves, stems and flowers.

It localises to the cytoplasm. The protein localises to the nucleus. Its function is as follows. The 26S proteasome is involved in the ATP-dependent degradation of ubiquitinated proteins. The regulatory (or ATPase) complex confers ATP dependency and substrate specificity to the 26S complex. The sequence is that of 26S proteasome regulatory subunit 6B homolog (RPT3) from Arabidopsis thaliana (Mouse-ear cress).